The primary structure comprises 394 residues: Elongation factor Tu 1 (394 aa).

A tr-type G domain is found at lysine 10–glutamate 204. A G1 region spans residues glycine 19 to threonine 26. GTP is bound at residue glycine 19–threonine 26. A Mg(2+)-binding site is contributed by threonine 26. The G2 stretch occupies residues glycine 60–asparagine 64. Residues aspartate 81–glycine 84 are G3. GTP contacts are provided by residues aspartate 81–histidine 85 and asparagine 136–aspartate 139. The tract at residues asparagine 136–aspartate 139 is G4. Residues serine 174–leucine 176 are G5.

This sequence belongs to the TRAFAC class translation factor GTPase superfamily. Classic translation factor GTPase family. EF-Tu/EF-1A subfamily. In terms of assembly, monomer.

It is found in the cytoplasm. It catalyses the reaction GTP + H2O = GDP + phosphate + H(+). In terms of biological role, GTP hydrolase that promotes the GTP-dependent binding of aminoacyl-tRNA to the A-site of ribosomes during protein biosynthesis. The protein is Elongation factor Tu 1 of Shigella flexneri serotype 5b (strain 8401).